A 39-amino-acid chain; its full sequence is Anthranilate phosphoribosyltransferase (39 aa).

Belongs to the anthranilate phosphoribosyltransferase family. In terms of assembly, homodimer.

It carries out the reaction N-(5-phospho-beta-D-ribosyl)anthranilate + diphosphate = 5-phospho-alpha-D-ribose 1-diphosphate + anthranilate. The protein operates within amino-acid biosynthesis; L-tryptophan biosynthesis; L-tryptophan from chorismate: step 2/5. Catalyzes the transfer of the phosphoribosyl group of 5-phosphorylribose-1-pyrophosphate (PRPP) to anthranilate to yield N-(5'-phosphoribosyl)-anthranilate (PRA). The sequence is that of Anthranilate phosphoribosyltransferase (trpD) from Pectobacterium carotovorum (Erwinia carotovora).